A 279-amino-acid polypeptide reads, in one-letter code: Prephenate dehydratase (279 aa).

The Prephenate dehydratase domain occupies 2–178 (KIAYLGPRGS…NSTRFWLLGK (177 aa)). One can recognise an ACT domain in the interval 194 to 272 (LALTLPDNLP…VNVRLLGNYS (79 aa)).

The catalysed reaction is prephenate + H(+) = 3-phenylpyruvate + CO2 + H2O. The protein operates within amino-acid biosynthesis; L-phenylalanine biosynthesis; phenylpyruvate from prephenate: step 1/1. The sequence is that of Prephenate dehydratase (pheA) from Lactococcus lactis subsp. cremoris (strain MG1363).